Here is a 423-residue protein sequence, read N- to C-terminus: AP-1 complex subunit mu-2 (423 aa).

Residues 168 to 421 form the MHD domain; the sequence is KNEVFIDVIE…ITQSGDYQLR (254 aa).

The protein belongs to the adaptor complexes medium subunit family. Adaptor protein complex 1 (AP-1) is a heterotetramer composed of two large adaptins (gamma-type subunit AP1G1 and beta-type subunit AP1B1), a medium adaptin (mu-type subunit AP1M1 or AP1M2) and a small adaptin (sigma-type subunit AP1S1 or AP1S2 or AP1S3). Interacts with P2X4. Phosphorylation of membrane-bound AP1M1/AP1M2 increases its affinity for sorting signals.

Its subcellular location is the cytoplasmic vesicle. The protein localises to the clathrin-coated vesicle membrane. It localises to the golgi apparatus. Subunit of clathrin-associated adaptor protein complex 1 that plays a role in protein sorting in the trans-Golgi network (TGN) and endosomes. The AP complexes mediate the recruitment of clathrin to membranes and the recognition of sorting signals within the cytosolic tails of transmembrane cargo molecules. The protein is AP-1 complex subunit mu-2 of Bos taurus (Bovine).